Here is a 147-residue protein sequence, read N- to C-terminus: UPF0735 ACT domain-containing protein GTNG_2535 (147 aa).

In terms of domain architecture, ACT spans 69–144; that stretch reads TLFFHLEDRS…FVEKVEIVGS (76 aa).

The protein belongs to the UPF0735 family.

In Geobacillus thermodenitrificans (strain NG80-2), this protein is UPF0735 ACT domain-containing protein GTNG_2535.